Reading from the N-terminus, the 298-residue chain is Protoheme IX farnesyltransferase (298 aa).

The next 9 membrane-spanning stretches (helical) occupy residues 26-46 (VVSL…PGVV), 52-72 (IFAT…NCLV), 99-119 (FVFL…LVNP), 120-140 (LTMW…TVIL), 148-168 (IVIG…AVTG), 174-194 (ALLL…ALAL), 219-239 (LHVL…YATQ), 241-261 (SGLI…YYAV), and 276-296 (FRYS…DHYI).

The protein belongs to the UbiA prenyltransferase family. Protoheme IX farnesyltransferase subfamily.

The protein localises to the cell inner membrane. It catalyses the reaction heme b + (2E,6E)-farnesyl diphosphate + H2O = Fe(II)-heme o + diphosphate. The protein operates within porphyrin-containing compound metabolism; heme O biosynthesis; heme O from protoheme: step 1/1. Functionally, converts heme B (protoheme IX) to heme O by substitution of the vinyl group on carbon 2 of heme B porphyrin ring with a hydroxyethyl farnesyl side group. In Nitrosospira multiformis (strain ATCC 25196 / NCIMB 11849 / C 71), this protein is Protoheme IX farnesyltransferase.